Here is a 48-residue protein sequence, read N- to C-terminus: 2-deoxy-glucose resistant protein 1, mitochondrial (48 aa).

The N-terminal 28 residues, 1 to 28 (MQVGFVSQTNCRSFPACIVFLFQMSQRQ), are a transit peptide targeting the mitochondrion.

It is found in the mitochondrion. This chain is 2-deoxy-glucose resistant protein 1, mitochondrial (DGR1), found in Saccharomyces cerevisiae (strain ATCC 204508 / S288c) (Baker's yeast).